The following is a 297-amino-acid chain: Glutamyl-Q tRNA(Asp) synthetase (297 aa).

L-glutamate is bound by residues 7-11 and glutamate 43; that span reads RFAPS. The 'HIGH' region signature appears at 10 to 20; it reads PSPTGPLHFGS. Residues cysteine 99, cysteine 101, tyrosine 122, and cysteine 126 each coordinate Zn(2+). Residues tyrosine 182 and arginine 200 each coordinate L-glutamate. The 'KMSKS' region motif lies at 238 to 242; sequence KLSKQ. An ATP-binding site is contributed by lysine 241.

The protein belongs to the class-I aminoacyl-tRNA synthetase family. GluQ subfamily. Zn(2+) serves as cofactor.

Its function is as follows. Catalyzes the tRNA-independent activation of glutamate in presence of ATP and the subsequent transfer of glutamate onto a tRNA(Asp). Glutamate is transferred on the 2-amino-5-(4,5-dihydroxy-2-cyclopenten-1-yl) moiety of the queuosine in the wobble position of the QUC anticodon. The chain is Glutamyl-Q tRNA(Asp) synthetase from Burkholderia pseudomallei (strain K96243).